The primary structure comprises 238 residues: Pyridoxine 5'-phosphate synthase (238 aa).

Asparagine 6 contacts 3-amino-2-oxopropyl phosphate. Residue 8–9 coordinates 1-deoxy-D-xylulose 5-phosphate; the sequence is DH. Residue arginine 17 coordinates 3-amino-2-oxopropyl phosphate. Histidine 42 acts as the Proton acceptor in catalysis. Residues arginine 44 and histidine 49 each coordinate 1-deoxy-D-xylulose 5-phosphate. Residue glutamate 69 is the Proton acceptor of the active site. Threonine 99 provides a ligand contact to 1-deoxy-D-xylulose 5-phosphate. Catalysis depends on histidine 190, which acts as the Proton donor. 3-amino-2-oxopropyl phosphate contacts are provided by residues glycine 191 and 212 to 213; that span reads GH.

It belongs to the PNP synthase family. In terms of assembly, homooctamer; tetramer of dimers.

Its subcellular location is the cytoplasm. It catalyses the reaction 3-amino-2-oxopropyl phosphate + 1-deoxy-D-xylulose 5-phosphate = pyridoxine 5'-phosphate + phosphate + 2 H2O + H(+). It functions in the pathway cofactor biosynthesis; pyridoxine 5'-phosphate biosynthesis; pyridoxine 5'-phosphate from D-erythrose 4-phosphate: step 5/5. In terms of biological role, catalyzes the complicated ring closure reaction between the two acyclic compounds 1-deoxy-D-xylulose-5-phosphate (DXP) and 3-amino-2-oxopropyl phosphate (1-amino-acetone-3-phosphate or AAP) to form pyridoxine 5'-phosphate (PNP) and inorganic phosphate. In Chlorobium phaeobacteroides (strain BS1), this protein is Pyridoxine 5'-phosphate synthase.